The chain runs to 364 residues: DNA replication and repair protein RecF (364 aa).

ATP is bound at residue 30-37 (GNNGMGKT).

The protein belongs to the RecF family.

It is found in the cytoplasm. The RecF protein is involved in DNA metabolism; it is required for DNA replication and normal SOS inducibility. RecF binds preferentially to single-stranded, linear DNA. It also seems to bind ATP. This is DNA replication and repair protein RecF from Porphyromonas gingivalis (strain ATCC 33277 / DSM 20709 / CIP 103683 / JCM 12257 / NCTC 11834 / 2561).